The following is a 315-amino-acid chain: Methionyl-tRNA formyltransferase (315 aa).

117-120 (SLLP) provides a ligand contact to (6S)-5,6,7,8-tetrahydrofolate.

The protein belongs to the Fmt family.

It catalyses the reaction L-methionyl-tRNA(fMet) + (6R)-10-formyltetrahydrofolate = N-formyl-L-methionyl-tRNA(fMet) + (6S)-5,6,7,8-tetrahydrofolate + H(+). Attaches a formyl group to the free amino group of methionyl-tRNA(fMet). The formyl group appears to play a dual role in the initiator identity of N-formylmethionyl-tRNA by promoting its recognition by IF2 and preventing the misappropriation of this tRNA by the elongation apparatus. The chain is Methionyl-tRNA formyltransferase from Methylibium petroleiphilum (strain ATCC BAA-1232 / LMG 22953 / PM1).